The following is a 279-amino-acid chain: Diaminopimelate epimerase (279 aa).

Substrate contacts are provided by N13, Q46, and N66. The active-site Proton donor is C75. Substrate is bound by residues 76-77 (GN), N161, N194, and 212-213 (ER). C221 acts as the Proton acceptor in catalysis. 222-223 (GT) contacts substrate.

It belongs to the diaminopimelate epimerase family. Homodimer.

It is found in the cytoplasm. It carries out the reaction (2S,6S)-2,6-diaminopimelate = meso-2,6-diaminopimelate. Its pathway is amino-acid biosynthesis; L-lysine biosynthesis via DAP pathway; DL-2,6-diaminopimelate from LL-2,6-diaminopimelate: step 1/1. Functionally, catalyzes the stereoinversion of LL-2,6-diaminopimelate (L,L-DAP) to meso-diaminopimelate (meso-DAP), a precursor of L-lysine and an essential component of the bacterial peptidoglycan. This chain is Diaminopimelate epimerase, found in Alkalilimnicola ehrlichii (strain ATCC BAA-1101 / DSM 17681 / MLHE-1).